A 130-amino-acid polypeptide reads, in one-letter code: HTH-type transcriptional repressor YtrA (130 aa).

In terms of domain architecture, HTH gntR-type spans Thr10–Asn78. A DNA-binding region (H-T-H motif) is located at residues Val38–Lys57.

In terms of biological role, negatively regulates ABC transporter complex ytrBCDEF that plays a role in acetoin utilization during stationary phase and sporulation. The polypeptide is HTH-type transcriptional repressor YtrA (ytrA) (Bacillus subtilis (strain 168)).